Here is an 89-residue protein sequence, read N- to C-terminus: MSLSTEKKAAIVAEFGRDAKDTGSSEVQIALLTAQINHLQSHFATHKKDHHGRRGLLRMVSRRRKLLDYLKRTNLELYTSTIARLGLRR.

The protein belongs to the universal ribosomal protein uS15 family. As to quaternary structure, part of the 30S ribosomal subunit. Forms a bridge to the 50S subunit in the 70S ribosome, contacting the 23S rRNA.

One of the primary rRNA binding proteins, it binds directly to 16S rRNA where it helps nucleate assembly of the platform of the 30S subunit by binding and bridging several RNA helices of the 16S rRNA. Functionally, forms an intersubunit bridge (bridge B4) with the 23S rRNA of the 50S subunit in the ribosome. The polypeptide is Small ribosomal subunit protein uS15 (Pasteurella multocida (strain Pm70)).